A 205-amino-acid polypeptide reads, in one-letter code: Protein N-terminal glutamine amidohydrolase (205 aa).

Residues C20, H74, and D90 contribute to the active site.

This sequence belongs to the NTAQ1 family. In terms of assembly, monomer.

The catalysed reaction is N-terminal L-glutaminyl-[protein] + H2O = N-terminal L-glutamyl-[protein] + NH4(+). Its function is as follows. Mediates the side-chain deamidation of N-terminal glutamine residues to glutamate, an important step in N-end rule pathway of protein degradation. Conversion of the resulting N-terminal glutamine to glutamate renders the protein susceptible to arginylation, polyubiquitination and degradation as specified by the N-end rule. Does not act on substrates with internal or C-terminal glutamine and does not act on non-glutamine residues in any position. This chain is Protein N-terminal glutamine amidohydrolase (tun), found in Drosophila mojavensis (Fruit fly).